A 161-amino-acid polypeptide reads, in one-letter code: Phosphopantetheine adenylyltransferase (161 aa).

Residue serine 9 coordinates substrate. ATP is bound by residues 9–10 and histidine 17; that span reads SF. Substrate-binding residues include lysine 41, threonine 73, and arginine 87. ATP contacts are provided by residues 88-90, glutamate 98, and 123-129; these read GLR and FAHISST.

Belongs to the bacterial CoaD family. Homohexamer. It depends on Mg(2+) as a cofactor.

The protein resides in the cytoplasm. It catalyses the reaction (R)-4'-phosphopantetheine + ATP + H(+) = 3'-dephospho-CoA + diphosphate. It participates in cofactor biosynthesis; coenzyme A biosynthesis; CoA from (R)-pantothenate: step 4/5. In terms of biological role, reversibly transfers an adenylyl group from ATP to 4'-phosphopantetheine, yielding dephospho-CoA (dPCoA) and pyrophosphate. The protein is Phosphopantetheine adenylyltransferase of Chloroflexus aggregans (strain MD-66 / DSM 9485).